We begin with the raw amino-acid sequence, 150 residues long: Protein-export protein SecB (150 aa).

It belongs to the SecB family. As to quaternary structure, homotetramer, a dimer of dimers. One homotetramer interacts with 1 SecA dimer.

The protein localises to the cytoplasm. In terms of biological role, one of the proteins required for the normal export of preproteins out of the cell cytoplasm. It is a molecular chaperone that binds to a subset of precursor proteins, maintaining them in a translocation-competent state. It also specifically binds to its receptor SecA. This Psychrobacter cryohalolentis (strain ATCC BAA-1226 / DSM 17306 / VKM B-2378 / K5) protein is Protein-export protein SecB.